The following is a 115-amino-acid chain: Large ribosomal subunit protein eL30 (115 aa).

2 positions are modified to phosphoserine: Ser10 and Ser16. An N6-acetyllysine; alternate modification is found at Lys26. Lys26 participates in a covalent cross-link: Glycyl lysine isopeptide (Lys-Gly) (interchain with G-Cter in SUMO2); alternate.

The protein belongs to the eukaryotic ribosomal protein eL30 family. In terms of assembly, component of the large ribosomal subunit.

It is found in the cytoplasm. Component of the large ribosomal subunit. The ribosome is a large ribonucleoprotein complex responsible for the synthesis of proteins in the cell. This Oryctolagus cuniculus (Rabbit) protein is Large ribosomal subunit protein eL30 (RPL30).